Here is a 336-residue protein sequence, read N- to C-terminus: Holliday junction branch migration complex subunit RuvB (336 aa).

Residues 4–184 (SDRLISSQSI…FGIVQRLEYY (181 aa)) are large ATPase domain (RuvB-L). Residues isoleucine 23, arginine 24, glycine 65, lysine 68, threonine 69, threonine 70, 131–133 (EDY), arginine 174, tyrosine 184, and arginine 221 contribute to the ATP site. Threonine 69 contacts Mg(2+). Residues 185–255 (SVDSLTKIVA…MAQQALEMLE (71 aa)) are small ATPAse domain (RuvB-S). The head domain (RuvB-H) stretch occupies residues 258–336 (QHGFDLMDRK…HFGFSAIEQE (79 aa)). The DNA site is built by arginine 313 and arginine 318.

This sequence belongs to the RuvB family. Homohexamer. Forms an RuvA(8)-RuvB(12)-Holliday junction (HJ) complex. HJ DNA is sandwiched between 2 RuvA tetramers; dsDNA enters through RuvA and exits via RuvB. An RuvB hexamer assembles on each DNA strand where it exits the tetramer. Each RuvB hexamer is contacted by two RuvA subunits (via domain III) on 2 adjacent RuvB subunits; this complex drives branch migration. In the full resolvosome a probable DNA-RuvA(4)-RuvB(12)-RuvC(2) complex forms which resolves the HJ.

It localises to the cytoplasm. The enzyme catalyses ATP + H2O = ADP + phosphate + H(+). Functionally, the RuvA-RuvB-RuvC complex processes Holliday junction (HJ) DNA during genetic recombination and DNA repair, while the RuvA-RuvB complex plays an important role in the rescue of blocked DNA replication forks via replication fork reversal (RFR). RuvA specifically binds to HJ cruciform DNA, conferring on it an open structure. The RuvB hexamer acts as an ATP-dependent pump, pulling dsDNA into and through the RuvAB complex. RuvB forms 2 homohexamers on either side of HJ DNA bound by 1 or 2 RuvA tetramers; 4 subunits per hexamer contact DNA at a time. Coordinated motions by a converter formed by DNA-disengaged RuvB subunits stimulates ATP hydrolysis and nucleotide exchange. Immobilization of the converter enables RuvB to convert the ATP-contained energy into a lever motion, pulling 2 nucleotides of DNA out of the RuvA tetramer per ATP hydrolyzed, thus driving DNA branch migration. The RuvB motors rotate together with the DNA substrate, which together with the progressing nucleotide cycle form the mechanistic basis for DNA recombination by continuous HJ branch migration. Branch migration allows RuvC to scan DNA until it finds its consensus sequence, where it cleaves and resolves cruciform DNA. The protein is Holliday junction branch migration complex subunit RuvB of Legionella pneumophila (strain Paris).